The sequence spans 407 residues: Imidazolonepropionase (407 aa).

Histidine 68 and histidine 70 together coordinate Fe(3+). Histidine 68 and histidine 70 together coordinate Zn(2+). 3 residues coordinate 4-imidazolone-5-propanoate: arginine 77, tyrosine 140, and histidine 173. Tyrosine 140 is an N-formimidoyl-L-glutamate binding site. Histidine 238 is a binding site for Fe(3+). Histidine 238 is a Zn(2+) binding site. Glutamine 241 is a 4-imidazolone-5-propanoate binding site. Aspartate 313 is a binding site for Fe(3+). Aspartate 313 lines the Zn(2+) pocket. Residues asparagine 315 and glycine 317 each coordinate N-formimidoyl-L-glutamate. Threonine 318 lines the 4-imidazolone-5-propanoate pocket.

This sequence belongs to the metallo-dependent hydrolases superfamily. HutI family. The cofactor is Zn(2+). Requires Fe(3+) as cofactor.

It is found in the cytoplasm. The enzyme catalyses 4-imidazolone-5-propanoate + H2O = N-formimidoyl-L-glutamate. It participates in amino-acid degradation; L-histidine degradation into L-glutamate; N-formimidoyl-L-glutamate from L-histidine: step 3/3. In terms of biological role, catalyzes the hydrolytic cleavage of the carbon-nitrogen bond in imidazolone-5-propanoate to yield N-formimidoyl-L-glutamate. It is the third step in the universal histidine degradation pathway. The polypeptide is Imidazolonepropionase (Burkholderia lata (strain ATCC 17760 / DSM 23089 / LMG 22485 / NCIMB 9086 / R18194 / 383)).